Here is a 587-residue protein sequence, read N- to C-terminus: L-ascorbate oxidase (587 aa).

The N-terminal stretch at 1-33 (MAKVADKPFFPKPFLSFLVLSIIFGFGITLSEA) is a signal peptide. Plastocyanin-like domains follow at residues 38 to 157 (IKHY…LIVD) and 169 to 335 (DEEI…NYLP). Cystine bridges form between cysteine 54–cysteine 236, cysteine 116–cysteine 574, and cysteine 215–cysteine 228. Residues histidine 95, histidine 97, histidine 139, and histidine 141 each coordinate Cu cation. N-linked (GlcNAc...) asparagine glycans are attached at residues asparagine 360, asparagine 401, and asparagine 475. The 181-residue stretch at 379–559 (NRRLFLLNTQ…HMGMGVVFAE (181 aa)) folds into the Plastocyanin-like 3 domain. Cu cation is bound by residues histidine 480, histidine 483, histidine 485, histidine 542, cysteine 543, histidine 544, histidine 548, and methionine 553.

The protein belongs to the multicopper oxidase family. As to quaternary structure, dimer. The cofactor is Cu cation.

It is found in the secreted. It catalyses the reaction 4 L-ascorbate + O2 = 4 monodehydro-L-ascorbate radical + 2 H2O. In terms of biological role, may be involved in a redox system involving ascorbic acid. The protein is L-ascorbate oxidase of Cucumis sativus (Cucumber).